The following is a 491-amino-acid chain: MAALDSEGDAQKLRFGPWLLNAVSSGLYRGLCWIDPDRRIFRIPWKHNARKDVTSSDVEIFKAWAKASGRYEGNAEDPAKWKTNFRCALRSTHMFMLLEDRSKCNDDPHKVYAVASGVPNDRGSGGPVAGALQQQPQLLLNHHDLALENTPTDSTEGVAAAALTQVDLDLLQSVLQHCNISALGSQPTLWAHTGDALPEDALLLPGQDGCLPGPQFQDWRQLEEPLLLGNQPLTGGGCGQDGAGALPVSEECAIPAPSPAEELLFQSANPAPPPPAGDIGGLPPLLDITIYYRGKMVYQEQVDDSRCVLAYQPLDPAVAEQRLVLFPSPASLPDPRQRRYTEDLLEVAGLRLEQRAGQLLATRLKKCKVFWALSQQLEGGEPPLNLLHRDQETTIFDFRVFCTELRDFRDSRRERSPDFTIFLCFGQCFSSTKPKESKLILVKLVPQFCEYWYEQVQRGGASSLNSGNVSLQLSDSFNLFELIEQYHMQTD.

The segment at residues 12–116 (KLRFGPWLLN…DPHKVYAVAS (105 aa)) is a DNA-binding region (IRF tryptophan pentad repeat).

The protein belongs to the IRF family. As to expression, widely expressed with higher expression in lung, spleen and intestine.

The protein resides in the cytoplasm. Its subcellular location is the nucleus. Its function is as follows. Key transcriptional regulator of type I interferon (IFN)-dependent immune responses which plays a critical role in the innate immune response against DNA and RNA viruses. Regulates the transcription of type I IFN genes (IFN-alpha and IFN-beta) and IFN-stimulated genes (ISG) by binding to an interferon-stimulated response element (ISRE) in their promoters. May activate transcription by complex formation with other transcriptional factors, possibly members of the STAT family. Binds specifically to the IFN-stimulated response element (ISRE) but not to the IRF-1 binding site PRD-I. This Gallus gallus (Chicken) protein is Interferon regulatory factor 3 (IRF3).